Here is a 401-residue protein sequence, read N- to C-terminus: Type I restriction enzyme EcoprrI specificity subunit (401 aa).

The protein belongs to the type-I restriction system S methylase family. As to quaternary structure, the type I restriction/modification system is composed of three polypeptides R, M and S; the restriction enzyme has stoichiometry R(2)M(2)S(1) while the methyltransferase is M(2)S(1).

Functionally, the specificity (S) subunit of a type I restriction enzyme; this subunit dictates DNA sequence specificity. The M and S subunits together form a methyltransferase (MTase) that methylates two adenine residues of the sequence 5'-CCAN(7)ATGC-3'. In the presence of the R subunit the complex can also act as an endonuclease, binding to the same target sequence but cutting the DNA some distance from this site. Whether the DNA is cut or modified depends on the methylation state of the target sequence. When the target site is unmodified, the DNA is cut. When the target site is hemimethylated, the complex acts as a maintenance MTase modifying the DNA so that both strands become methylated. After locating a non-methylated recognition site, the enzyme complex serves as a molecular motor that translocates DNA in an ATP-dependent manner until a collision occurs that triggers cleavage. This Escherichia coli protein is Type I restriction enzyme EcoprrI specificity subunit (prrB).